We begin with the raw amino-acid sequence, 281 residues long: Energy-coupling factor transporter ATP-binding protein EcfA1 (281 aa).

Positions Ile7–Asp242 constitute an ABC transporter domain. Gly42–Ser49 contributes to the ATP binding site.

This sequence belongs to the ABC transporter superfamily. Energy-coupling factor EcfA family. In terms of assembly, forms a stable energy-coupling factor (ECF) transporter complex composed of 2 membrane-embedded substrate-binding proteins (S component), 2 ATP-binding proteins (A component) and 2 transmembrane proteins (T component).

It localises to the cell membrane. Its function is as follows. ATP-binding (A) component of a common energy-coupling factor (ECF) ABC-transporter complex. Unlike classic ABC transporters this ECF transporter provides the energy necessary to transport a number of different substrates. The chain is Energy-coupling factor transporter ATP-binding protein EcfA1 from Bacillus licheniformis (strain ATCC 14580 / DSM 13 / JCM 2505 / CCUG 7422 / NBRC 12200 / NCIMB 9375 / NCTC 10341 / NRRL NRS-1264 / Gibson 46).